The sequence spans 145 residues: MKQQKDASKPAHFFHQVIVIALVLFVSKIIESFMPIPMPASVIGLVLLFVLLCTGAVKLGEVEKVGTTLTNNIGLLFVPAGISVVNSLGVISQAPFLIIGLIIVSTILLLICTGYVTQIIMKVTSRSKGDKVTKKIKIEEAQAHD.

4 consecutive transmembrane segments (helical) span residues 10–30, 33–53, 72–92, and 96–116; these read PAHFFHQVIVIALVLFVSKII, FMPIPMPASVIGLVLLFVLLC, NIGLLFVPAGISVVNSLGVIS, and FLIIGLIIVSTILLLICTGYV.

This sequence belongs to the CidA/LrgA family. LrgA subfamily.

The protein localises to the cell membrane. In terms of biological role, inhibits the expression or activity of extracellular murein hydrolases by interacting, possibly with LrgB, with the holin-like proteins CidA and/or CidB. The LrgAB and CidAB proteins may affect the proton motive force of the membrane. May be involved in programmed cell death (PCD), possibly triggering PCD in response to antibiotics and environmental stresses. The sequence is that of Antiholin-like protein LrgA from Staphylococcus aureus (strain Mu3 / ATCC 700698).